Reading from the N-terminus, the 239-residue chain is Serine protease SplC (239 aa).

The signal sequence occupies residues 1–36 (MNKNIVIKSMAALAILTSATGINAAVVEETQQIANA). Residues H75, D113, and S193 each act as charge relay system in the active site.

It belongs to the peptidase S1B family.

The protein resides in the secreted. This is Serine protease SplC (splC) from Staphylococcus aureus (strain MSSA476).